The chain runs to 430 residues: MNTADITAYMQNVGKEARAASRALAAANTGDKNAALMAIHDVLKNAKQDILSANKIDMDNGQKNDLDAALLDRLELNDARFDGMLQGLKDVAALPDPIGEVTDMTYRPSGIHLGKMRVPLGVVGMIYESRPNVTLEAASLALKSGNAIILRGGSEAFESNQAIAKCILEGLKKVGMSEYSVQVLETTDRAAVGELITMTDYVDVIVPRGGKGLIERISRDARVPVIKHLDGNCHTFIDSDADPEIAIKVSVNAKTHRYGTCNTMETLLVDEAIANELLPKIAEAIVKADDAMQLRLDDKAQAILNDNTTLKGHLSAATAEDWDTEYLAPILAIKILSGIDEAIEHINTHGSHHTDVIITDNYTKSQRFIREVDSASVMINASSRFADGFEYGLGAEIGISTDKIHARGPVGLEGLTSQKWIVYGHGETRA.

This sequence belongs to the gamma-glutamyl phosphate reductase family.

Its subcellular location is the cytoplasm. It catalyses the reaction L-glutamate 5-semialdehyde + phosphate + NADP(+) = L-glutamyl 5-phosphate + NADPH + H(+). It functions in the pathway amino-acid biosynthesis; L-proline biosynthesis; L-glutamate 5-semialdehyde from L-glutamate: step 2/2. Catalyzes the NADPH-dependent reduction of L-glutamate 5-phosphate into L-glutamate 5-semialdehyde and phosphate. The product spontaneously undergoes cyclization to form 1-pyrroline-5-carboxylate. The sequence is that of Gamma-glutamyl phosphate reductase from Psychrobacter arcticus (strain DSM 17307 / VKM B-2377 / 273-4).